We begin with the raw amino-acid sequence, 463 residues long: NADH-ubiquinone oxidoreductase chain 4 (463 aa).

Helical transmembrane passes span 24–44 (LWAG…IVLN), 62–82 (TISA…LIAS), 98–118 (IIMI…LELI), 119–139 (LFYI…TRWG), 151–171 (FMFY…AIYI), 198–218 (WALS…HLWL), 232–252 (ILAA…IALF), 260–280 (LSLA…VICV), 285–305 (LKAL…AAIF), 310–330 (WGMN…SALF), 353–373 (LLLP…LGLP), 404–424 (VFGA…TPFT), and 442–462 (LHIL…IAWL).

This sequence belongs to the complex I subunit 4 family.

It is found in the mitochondrion membrane. The enzyme catalyses a ubiquinone + NADH + 5 H(+)(in) = a ubiquinol + NAD(+) + 4 H(+)(out). Functionally, core subunit of the mitochondrial membrane respiratory chain NADH dehydrogenase (Complex I) that is believed to belong to the minimal assembly required for catalysis. Complex I functions in the transfer of electrons from NADH to the respiratory chain. The immediate electron acceptor for the enzyme is believed to be ubiquinone. In Strongylocentrotus purpuratus (Purple sea urchin), this protein is NADH-ubiquinone oxidoreductase chain 4 (ND4).